A 561-amino-acid chain; its full sequence is DNA ligase B (561 aa).

The active-site N6-AMP-lysine intermediate is Lys-125.

Belongs to the NAD-dependent DNA ligase family. LigB subfamily.

It carries out the reaction NAD(+) + (deoxyribonucleotide)n-3'-hydroxyl + 5'-phospho-(deoxyribonucleotide)m = (deoxyribonucleotide)n+m + AMP + beta-nicotinamide D-nucleotide.. Its function is as follows. Catalyzes the formation of phosphodiester linkages between 5'-phosphoryl and 3'-hydroxyl groups in double-stranded DNA using NAD as a coenzyme and as the energy source for the reaction. The protein is DNA ligase B of Salmonella paratyphi A (strain AKU_12601).